Consider the following 306-residue polypeptide: Ribonuclease Z (306 aa).

Residues His63, His65, Asp67, His68, His141, Asp208, and His266 each coordinate Zn(2+). Asp67 serves as the catalytic Proton acceptor.

This sequence belongs to the RNase Z family. Homodimer. It depends on Zn(2+) as a cofactor.

The catalysed reaction is Endonucleolytic cleavage of RNA, removing extra 3' nucleotides from tRNA precursor, generating 3' termini of tRNAs. A 3'-hydroxy group is left at the tRNA terminus and a 5'-phosphoryl group is left at the trailer molecule.. Zinc phosphodiesterase, which displays some tRNA 3'-processing endonuclease activity. Probably involved in tRNA maturation, by removing a 3'-trailer from precursor tRNA. The polypeptide is Ribonuclease Z (Protochlamydia amoebophila (strain UWE25)).